We begin with the raw amino-acid sequence, 291 residues long: 4-diphosphocytidyl-2-C-methyl-D-erythritol kinase (291 aa).

Lys-19 is a catalytic residue. 102–112 lines the ATP pocket; the sequence is PMGGGIGGGSS. Asp-144 is an active-site residue.

Belongs to the GHMP kinase family. IspE subfamily.

The catalysed reaction is 4-CDP-2-C-methyl-D-erythritol + ATP = 4-CDP-2-C-methyl-D-erythritol 2-phosphate + ADP + H(+). It functions in the pathway isoprenoid biosynthesis; isopentenyl diphosphate biosynthesis via DXP pathway; isopentenyl diphosphate from 1-deoxy-D-xylulose 5-phosphate: step 3/6. Functionally, catalyzes the phosphorylation of the position 2 hydroxy group of 4-diphosphocytidyl-2C-methyl-D-erythritol. In Ectopseudomonas mendocina (strain ymp) (Pseudomonas mendocina), this protein is 4-diphosphocytidyl-2-C-methyl-D-erythritol kinase.